We begin with the raw amino-acid sequence, 397 residues long: Succinate--CoA ligase [ADP-forming] subunit beta (397 aa).

Residues 9 to 254 (KELLRGYGAP…TSEEDEKEIE (246 aa)) form the ATP-grasp domain. Residues Lys-46, 53–55 (GRG), Glu-109, Ala-112, and Glu-117 contribute to the ATP site. Residues Asn-209 and Asp-223 each coordinate Mg(2+). Substrate contacts are provided by residues Asn-274 and 331 to 333 (GIM).

Belongs to the succinate/malate CoA ligase beta subunit family. As to quaternary structure, heterotetramer of two alpha and two beta subunits. The cofactor is Mg(2+).

The catalysed reaction is succinate + ATP + CoA = succinyl-CoA + ADP + phosphate. It catalyses the reaction GTP + succinate + CoA = succinyl-CoA + GDP + phosphate. It functions in the pathway carbohydrate metabolism; tricarboxylic acid cycle; succinate from succinyl-CoA (ligase route): step 1/1. Succinyl-CoA synthetase functions in the citric acid cycle (TCA), coupling the hydrolysis of succinyl-CoA to the synthesis of either ATP or GTP and thus represents the only step of substrate-level phosphorylation in the TCA. The beta subunit provides nucleotide specificity of the enzyme and binds the substrate succinate, while the binding sites for coenzyme A and phosphate are found in the alpha subunit. The protein is Succinate--CoA ligase [ADP-forming] subunit beta of Chelativorans sp. (strain BNC1).